We begin with the raw amino-acid sequence, 84 residues long: Neurotoxin BM10-1-like (84 aa).

The signal sequence occupies residues 1–21; sequence MKTLLLTLVVVTIVCLDLGYT. Cystine bridges form between cysteine 24–cysteine 47, cysteine 27–cysteine 32, cysteine 40–cysteine 64, cysteine 68–cysteine 76, and cysteine 77–cysteine 82.

This sequence belongs to the three-finger toxin family. Ancestral subfamily. Orphan group IV sub-subfamily. As to expression, expressed by the venom gland.

Its subcellular location is the secreted. In terms of biological role, binds and inhibits muscular and neuronal nicotinic acetylcholine receptors (nAChR). This is Neurotoxin BM10-1-like from Bungarus multicinctus (Many-banded krait).